We begin with the raw amino-acid sequence, 242 residues long: Protein crossbronx (242 aa).

In terms of domain architecture, UBC core spans 20–176 (QQEYKILAEY…VQENIKESKA (157 aa)).

This sequence belongs to the ubiquitin-conjugating enzyme family. FTS subfamily.

The polypeptide is Protein crossbronx (cbx) (Drosophila ananassae (Fruit fly)).